A 69-amino-acid polypeptide reads, in one-letter code: DNA gyrase inhibitor YacG (69 aa).

The Zn(2+) site is built by Cys-7, Cys-10, Cys-26, and Cys-30.

The protein belongs to the DNA gyrase inhibitor YacG family. As to quaternary structure, interacts with GyrB. The cofactor is Zn(2+).

Functionally, inhibits all the catalytic activities of DNA gyrase by preventing its interaction with DNA. Acts by binding directly to the C-terminal domain of GyrB, which probably disrupts DNA binding by the gyrase. The polypeptide is DNA gyrase inhibitor YacG (Shewanella sp. (strain W3-18-1)).